The following is a 160-amino-acid chain: Lipoprotein signal peptidase (160 aa).

Transmembrane regions (helical) follow at residues 7–27 (WFWLVAIIGLGLDQLTKYITV), 39–59 (LWPGVFHLTYVINTGAAFSFF), 62–82 (GAVWLRWLSLAVSLGLIFLGW), and 96–116 (GFILAGALGNGIDRFLFGYVV). Active-site residues include D117 and D133. A helical transmembrane segment spans residues 126–146 (FPVFNLADTFINIGIFFLLLA).

It belongs to the peptidase A8 family.

It localises to the cell inner membrane. It carries out the reaction Release of signal peptides from bacterial membrane prolipoproteins. Hydrolyzes -Xaa-Yaa-Zaa-|-(S,diacylglyceryl)Cys-, in which Xaa is hydrophobic (preferably Leu), and Yaa (Ala or Ser) and Zaa (Gly or Ala) have small, neutral side chains.. The protein operates within protein modification; lipoprotein biosynthesis (signal peptide cleavage). This protein specifically catalyzes the removal of signal peptides from prolipoproteins. This Gloeothece citriformis (strain PCC 7424) (Cyanothece sp. (strain PCC 7424)) protein is Lipoprotein signal peptidase.